The primary structure comprises 583 residues: Threonine--tRNA ligase (583 aa).

The tract at residues 185–478 is catalytic; that stretch reads DHRKLGRELD…LVEHYGGAFP (294 aa). The Zn(2+) site is built by cysteine 278, histidine 329, and histidine 455.

The protein belongs to the class-II aminoacyl-tRNA synthetase family. In terms of assembly, homodimer. It depends on Zn(2+) as a cofactor.

Its subcellular location is the cytoplasm. It carries out the reaction tRNA(Thr) + L-threonine + ATP = L-threonyl-tRNA(Thr) + AMP + diphosphate + H(+). Its function is as follows. Catalyzes the attachment of threonine to tRNA(Thr) in a two-step reaction: L-threonine is first activated by ATP to form Thr-AMP and then transferred to the acceptor end of tRNA(Thr). Also edits incorrectly charged L-seryl-tRNA(Thr). This Borrelia turicatae (strain 91E135) protein is Threonine--tRNA ligase.